The following is a 235-amino-acid chain: Phosphoribosylaminoimidazole-succinocarboxamide synthase (235 aa).

It belongs to the SAICAR synthetase family.

It carries out the reaction 5-amino-1-(5-phospho-D-ribosyl)imidazole-4-carboxylate + L-aspartate + ATP = (2S)-2-[5-amino-1-(5-phospho-beta-D-ribosyl)imidazole-4-carboxamido]succinate + ADP + phosphate + 2 H(+). It functions in the pathway purine metabolism; IMP biosynthesis via de novo pathway; 5-amino-1-(5-phospho-D-ribosyl)imidazole-4-carboxamide from 5-amino-1-(5-phospho-D-ribosyl)imidazole-4-carboxylate: step 1/2. The chain is Phosphoribosylaminoimidazole-succinocarboxamide synthase from Streptococcus thermophilus (strain ATCC BAA-491 / LMD-9).